We begin with the raw amino-acid sequence, 707 residues long: Polyribonucleotide nucleotidyltransferase (707 aa).

The Mg(2+) site is built by aspartate 486 and aspartate 492. A KH domain is found at 553 to 612; it reads PRIHKIKINPEKIKDVIGKGGSVIRMLTEETGTIIEIEDDGTIKISATIGEKAKNAIRRI. The S1 motif domain maps to 622–690; the sequence is GRIYSGKVTR…RQGRLRLSIK (69 aa).

The protein belongs to the polyribonucleotide nucleotidyltransferase family. In terms of assembly, component of the RNA degradosome, which is a multiprotein complex involved in RNA processing and mRNA degradation. Requires Mg(2+) as cofactor.

It localises to the cytoplasm. The catalysed reaction is RNA(n+1) + phosphate = RNA(n) + a ribonucleoside 5'-diphosphate. Its function is as follows. Involved in mRNA degradation. Catalyzes the phosphorolysis of single-stranded polyribonucleotides processively in the 3'- to 5'-direction. This Buchnera aphidicola subsp. Schizaphis graminum (strain Sg) protein is Polyribonucleotide nucleotidyltransferase.